Here is a 151-residue protein sequence, read N- to C-terminus: Probable cGMP 3',5'-cyclic phosphodiesterase subunit delta (151 aa).

It belongs to the PDE6D/unc-119 family. In terms of assembly, interacts with Pde6.

It is found in the nucleus. The protein localises to the cytoplasm. This is Probable cGMP 3',5'-cyclic phosphodiesterase subunit delta from Drosophila sechellia (Fruit fly).